The primary structure comprises 263 residues: Thiamine thiazole synthase (263 aa).

NAD(+) contacts are provided by residues Ser36, 55–56 (ER), Gly63, Val127, and 157–159 (HVD). Asp159 and His174 together coordinate Fe cation. Met228 is an NAD(+) binding site. Residue Arg238 participates in glycine binding.

It belongs to the THI4 family. Homooctamer; tetramer of dimers. Fe(2+) serves as cofactor.

The catalysed reaction is hydrogen sulfide + glycine + NAD(+) = ADP-5-ethyl-4-methylthiazole-2-carboxylate + nicotinamide + 3 H2O + H(+). The protein operates within cofactor biosynthesis; thiamine diphosphate biosynthesis. Involved in the biosynthesis of the thiazole moiety of thiamine. Catalyzes the conversion of NAD and glycine to adenosine diphosphate 5-(2-hydroxyethyl)-4-methylthiazole-2-carboxylate (ADT), an adenylated thiazole intermediate, using free sulfide as a source of sulfur. This Solidesulfovibrio magneticus (strain ATCC 700980 / DSM 13731 / RS-1) (Desulfovibrio magneticus) protein is Thiamine thiazole synthase.